Reading from the N-terminus, the 203-residue chain is Peroxiredoxin (203 aa).

One can recognise a Thioredoxin domain in the interval 3–156 (VVLGQKAPDF…IIRVIKALQF (154 aa)). Residue Cys44 is the Cysteine sulfenic acid (-SOH) intermediate of the active site. Arg119 is a binding site for substrate.

This sequence belongs to the peroxiredoxin family. Prx6 subfamily. Homodecamer. Pentamer of dimers that assemble into a ring structure.

The protein localises to the cytoplasm. The catalysed reaction is a hydroperoxide + [thioredoxin]-dithiol = an alcohol + [thioredoxin]-disulfide + H2O. Functionally, thiol-specific peroxidase that catalyzes the reduction of hydrogen peroxide and organic hydroperoxides to water and alcohols, respectively. Plays a role in cell protection against oxidative stress by detoxifying peroxides. The chain is Peroxiredoxin from Thermoplasma volcanium (strain ATCC 51530 / DSM 4299 / JCM 9571 / NBRC 15438 / GSS1).